We begin with the raw amino-acid sequence, 417 residues long: Transmembrane protease serine 11G (417 aa).

Residues 1-21 are Cytoplasmic-facing; the sequence is MYQPGILVRRKRVWKPWTVAL. Residues 22–42 traverse the membrane as a helical; Signal-anchor for type II membrane protein segment; that stretch reads ITVALLLALAVLIGLLVYFLV. At 43–417 the chain is on the extracellular side; it reads YDEKTHYYQA…RDWIKSKTSI (375 aa). Positions 46-165 constitute an SEA domain; sequence KTHYYQASFW…PYLREMNAAQ (120 aa). Residue Asn-60 is glycosylated (N-linked (GlcNAc...) asparagine). A Peptidase S1 domain is found at 186–416; that stretch reads IADGKPADKA…YRDWIKSKTS (231 aa). A disulfide bridge connects residues Cys-211 and Cys-227. Catalysis depends on charge relay system residues His-226 and Asp-271. 2 disulfide bridges follow: Cys-336–Cys-352 and Cys-363–Cys-392. The active-site Charge relay system is the Ser-367.

This sequence belongs to the peptidase S1 family.

It is found in the membrane. In Mus musculus (Mouse), this protein is Transmembrane protease serine 11G (Tmprss11g).